Reading from the N-terminus, the 511-residue chain is Lysine--tRNA ligase (511 aa).

Residues Glu-422 and Glu-429 each coordinate Mg(2+).

The protein belongs to the class-II aminoacyl-tRNA synthetase family. Homodimer. It depends on Mg(2+) as a cofactor.

The protein resides in the cytoplasm. It catalyses the reaction tRNA(Lys) + L-lysine + ATP = L-lysyl-tRNA(Lys) + AMP + diphosphate. The polypeptide is Lysine--tRNA ligase (Chlorobaculum tepidum (strain ATCC 49652 / DSM 12025 / NBRC 103806 / TLS) (Chlorobium tepidum)).